A 332-amino-acid chain; its full sequence is Glyceraldehyde-3-phosphate dehydrogenase 1 (332 aa).

Residues arginine 11, isoleucine 12, aspartate 33, and threonine 120 each contribute to the NAD(+) site. Residues 149-151, threonine 180, 209-210, and arginine 232 contribute to the D-glyceraldehyde 3-phosphate site; these read SCT and TG. Cysteine 150 acts as the Nucleophile in catalysis. Asparagine 314 and tyrosine 318 together coordinate NAD(+).

This sequence belongs to the glyceraldehyde-3-phosphate dehydrogenase family. Homotetramer.

It is found in the cytoplasm. It catalyses the reaction D-glyceraldehyde 3-phosphate + phosphate + NAD(+) = (2R)-3-phospho-glyceroyl phosphate + NADH + H(+). It carries out the reaction NADH + H2O = (6R)-NADHX. The enzyme catalyses NADH + H2O = (6S)-NADHX. The catalysed reaction is NADPH + H2O = (6R)-NADPHX. It catalyses the reaction NADPH + H2O = (6S)-NADPHX. It functions in the pathway carbohydrate degradation; glycolysis; pyruvate from D-glyceraldehyde 3-phosphate: step 1/5. Functionally, glyceraldehyde-3-phosphate dehydrogenase (GAPDH) involved in glycolysis and gluconeogenesis. Catalyzes the reaction of glyceraldehyde-3-phosphate to 1,3 bis-phosphoglycerate. The contribution of the TDH1, TDH2, and TDH3 to the total glyceraldehyde-3-phosphate dehydrogenase activity is 10-15, 25-30, and 50-60%, respectively. May be involved in a process other than glycolysis because it is synthesized by cells in stationary phase. Its function is as follows. As a side activity, catalyzes the hydration of the nicotinamide ring of NADH or NADPH at the C6 position to give the corresponding hydrates, NADHX and NADPHX, which exist as R and S epimers, that cannot act as electron donors or acceptors and inhibit several dehydrogenases, making them toxic. This chain is Glyceraldehyde-3-phosphate dehydrogenase 1, found in Saccharomyces cerevisiae (strain ATCC 204508 / S288c) (Baker's yeast).